A 523-amino-acid chain; its full sequence is Spastin (523 aa).

The Cytoplasmic segment spans residues 1-41 (MLDKLSKHKTMFYERVKEIDQILFSQQQAKQTQLDNLSNNN). Residues 42–58 (ASGGFFSGFMKMFSPLS) constitute an intramembrane region (helical). Composition is skewed to low complexity over residues 57 to 71 (LSTP…NSNT), 171 to 184 (QQPP…QQQP), and 193 to 210 (TALR…TANN). Disordered stretches follow at residues 57 to 77 (LSTP…AISQ) and 129 to 218 (GISS…LDQI). At 59 to 523 (TPPNSSSNNN…ESYGTFAKGI (465 aa)) the chain is on the cytoplasmic side.

It belongs to the AAA ATPase family. Spastin subfamily. As to quaternary structure, homohexamer. The homohexamer is stabilized by ATP-binding. The homohexamer may adopt a ring conformation through which microtubules pass prior to being severed.

Its subcellular location is the membrane. The enzyme catalyses n ATP + n H2O + a microtubule = n ADP + n phosphate + (n+1) alpha/beta tubulin heterodimers.. Functionally, ATP-dependent microtubule severing protein. Stimulates microtubule minus-end depolymerization and poleward microtubule flux in the mitotic spindle. This is Spastin from Naegleria gruberi (Amoeba).